The sequence spans 353 residues: Nicotinate-nucleotide--dimethylbenzimidazole phosphoribosyltransferase (353 aa).

E318 functions as the Proton acceptor in the catalytic mechanism.

Belongs to the CobT family.

It carries out the reaction 5,6-dimethylbenzimidazole + nicotinate beta-D-ribonucleotide = alpha-ribazole 5'-phosphate + nicotinate + H(+). Its pathway is nucleoside biosynthesis; alpha-ribazole biosynthesis; alpha-ribazole from 5,6-dimethylbenzimidazole: step 1/2. In terms of biological role, catalyzes the synthesis of alpha-ribazole-5'-phosphate from nicotinate mononucleotide (NAMN) and 5,6-dimethylbenzimidazole (DMB). This is Nicotinate-nucleotide--dimethylbenzimidazole phosphoribosyltransferase from Roseiflexus sp. (strain RS-1).